The chain runs to 81 residues: MRKLALVPIQFYRYAISPLMASHCRFYPSCSCYAYEAIENHGLLRGGWLSIRRLGRCHPWNPGGYDPVPAVPTSRSSSMAE.

The protein belongs to the UPF0161 family.

Its subcellular location is the cell inner membrane. Functionally, could be involved in insertion of integral membrane proteins into the membrane. The chain is Putative membrane protein insertion efficiency factor from Pseudomonas syringae pv. syringae (strain B728a).